Consider the following 508-residue polypeptide: Maturase K (508 aa).

Belongs to the intron maturase 2 family. MatK subfamily.

The protein localises to the plastid. Its subcellular location is the chloroplast. In terms of biological role, usually encoded in the trnK tRNA gene intron. Probably assists in splicing its own and other chloroplast group II introns. This chain is Maturase K, found in Collinsia heterophylla (Purple Chinese houses).